The sequence spans 103 residues: Small ribosomal subunit protein uS10 (103 aa).

It belongs to the universal ribosomal protein uS10 family. In terms of assembly, part of the 30S ribosomal subunit.

Its function is as follows. Involved in the binding of tRNA to the ribosomes. This Saccharophagus degradans (strain 2-40 / ATCC 43961 / DSM 17024) protein is Small ribosomal subunit protein uS10.